A 306-amino-acid polypeptide reads, in one-letter code: Lymphotoxin-beta (306 aa).

Topologically, residues 1 to 27 are cytoplasmic; it reads MGTRGLQGLGGRPQGRGCLLLAVAGAT. Residues 28-48 traverse the membrane as a helical; Signal-anchor for type II membrane protein segment; it reads SLVTLLLAVPITVLAVLALVP. Over 49 to 306 the chain is Extracellular; that stretch reads QDQGRRVEKI…KTFFGAVMVG (258 aa). 2 disordered regions span residues 63-112 and 127-151; these read AQAQ…GPVA and PAADSTPDPGVQQLPKGEPETDLNP. Residues 74-85 are compositionally biased toward low complexity; that stretch reads PSCILPSPSSLS. A compositionally biased stretch (polar residues) spans 95–112; sequence QRSNASRNLASTSQGPVA. N-linked (GlcNAc...) asparagine glycosylation is present at Asn-98. Positions 154–305 constitute a THD domain; it reads PAAHLIGAWM…GKTFFGAVMV (152 aa). N-linked (GlcNAc...) asparagine glycosylation occurs at Asn-284.

The protein belongs to the tumor necrosis factor family. Heterotrimer of either two LTB and one LTA subunits or (less prevalent) two LTA and one LTB subunits.

It localises to the membrane. Cytokine that binds to LTBR/TNFRSF3. May play a specific role in immune response regulation. Provides the membrane anchor for the attachment of the heterotrimeric complex to the cell surface. This Mus musculus (Mouse) protein is Lymphotoxin-beta (Ltb).